A 103-amino-acid chain; its full sequence is MIVTTTPSVEGHQIATYHGIVTGEAILGANVIRDLFAGITDFIGGRSGAYEKELGRARETALSEMEQAARAKGANAVVGVDLDYEVINNMLMVSASGTAVTIA.

The protein belongs to the UPF0145 family.

This is UPF0145 protein Rsph17025_2361 from Cereibacter sphaeroides (strain ATCC 17025 / ATH 2.4.3) (Rhodobacter sphaeroides).